A 433-amino-acid chain; its full sequence is Histidinol dehydrogenase (433 aa).

Substrate is bound by residues Ser236, Gln258, and His261. Zn(2+) is bound by residues Gln258 and His261. Catalysis depends on proton acceptor residues Glu325 and His326. 4 residues coordinate substrate: His326, Asp359, Glu413, and His418. A Zn(2+)-binding site is contributed by Asp359. His418 is a Zn(2+) binding site.

The protein belongs to the histidinol dehydrogenase family. The cofactor is Zn(2+).

The catalysed reaction is L-histidinol + 2 NAD(+) + H2O = L-histidine + 2 NADH + 3 H(+). It participates in amino-acid biosynthesis; L-histidine biosynthesis; L-histidine from 5-phospho-alpha-D-ribose 1-diphosphate: step 9/9. Catalyzes the sequential NAD-dependent oxidations of L-histidinol to L-histidinaldehyde and then to L-histidine. This chain is Histidinol dehydrogenase, found in Pseudoalteromonas translucida (strain TAC 125).